The following is a 491-amino-acid chain: Large ribosomal subunit protein mL101 (rPPR4) (491 aa).

PPR repeat units lie at residues 122-156 (TELTYGSLLNCYCKELLTEKAEGLLNKMKELNITP), 157-191 (SSMSYNSLMTLYTKTGETEKVPAMIQELKAENVMP), 192-226 (DSYTYNVWMRALAATNDISGVERVIEEMNRDGRVA), 228-262 (DWTTYSNMASIYVDAGLSQKAEKALQELEMKNTQR), 263-293 (DFTAYQFLITLYGRLGKLTEVYRIWRSLRLA), 298-328 (SNVAYLNMIQVLVKLNDLPGAETLFKEWQAN), 333-367 (DIRIVNVLIGAYAQEGLIQKANELKEKAPRRGGKL), and 368-402 (NAKTWEIFMDYYVKSGDMARALECMSKAVSIGKGD).

The protein belongs to the PPR family. P subfamily. In terms of assembly, component of the mitochondrial ribosome large subunit.

The protein localises to the mitochondrion. This is Large ribosomal subunit protein mL101 (rPPR4) from Arabidopsis thaliana (Mouse-ear cress).